The chain runs to 622 residues: Chaperone protein HscA homolog (622 aa).

The protein belongs to the heat shock protein 70 family.

Functionally, chaperone involved in the maturation of iron-sulfur cluster-containing proteins. Has a low intrinsic ATPase activity which is markedly stimulated by HscB. This chain is Chaperone protein HscA homolog, found in Burkholderia pseudomallei (strain 1710b).